The primary structure comprises 343 residues: Mediator of RNA polymerase II transcription subunit 2 (343 aa).

Disordered stretches follow at residues 105 to 141 (KQQQEEEQRRKHQAELEKNKRQQEHDAATKAAAAQQL) and 252 to 277 (STNEASTNNRNNDGTGGASNPRISSN). A compositionally biased stretch (basic and acidic residues) spans 107–132 (QQEEEQRRKHQAELEKNKRQQEHDAA). Residues 252-264 (STNEASTNNRNND) show a composition bias toward polar residues.

The protein belongs to the Mediator complex subunit 2 family. As to quaternary structure, component of the Mediator complex.

The protein resides in the nucleus. Functionally, component of the Mediator complex, a coactivator involved in the regulated transcription of nearly all RNA polymerase II-dependent genes. Mediator functions as a bridge to convey information from gene-specific regulatory proteins to the basal RNA polymerase II transcription machinery. Mediator is recruited to promoters by direct interactions with regulatory proteins and serves as a scaffold for the assembly of a functional preinitiation complex with RNA polymerase II and the general transcription factors. The chain is Mediator of RNA polymerase II transcription subunit 2 (MED2) from Eremothecium gossypii (strain ATCC 10895 / CBS 109.51 / FGSC 9923 / NRRL Y-1056) (Yeast).